A 167-amino-acid polypeptide reads, in one-letter code: Small ribosomal subunit protein uS7c (167 aa).

Belongs to the universal ribosomal protein uS7 family. In terms of assembly, part of the 30S ribosomal subunit.

Its subcellular location is the plastid. The protein localises to the chloroplast. Functionally, one of the primary rRNA binding proteins, it binds directly to 16S rRNA where it nucleates assembly of the head domain of the 30S subunit. The chain is Small ribosomal subunit protein uS7c (rps7) from Tetradesmus obliquus (Green alga).